The sequence spans 85 residues: RNA-binding protein KhpA (85 aa).

Residues 32 to 85 (YLEYNLTVNPEDIGRVIGRQGRVASAIRTIVYSVRVSGPKRVRLTIEDGQQKNS) enclose the KH domain.

Belongs to the KhpA RNA-binding protein family. Forms a complex with KhpB.

It is found in the cytoplasm. Functionally, a probable RNA chaperone. Forms a complex with KhpB which binds to cellular RNA and controls its expression. Plays a role in peptidoglycan (PG) homeostasis and cell length regulation. Its function is as follows. Necessary for correct cell elongation. This chain is RNA-binding protein KhpA, found in Lactiplantibacillus plantarum (strain ATCC BAA-793 / NCIMB 8826 / WCFS1) (Lactobacillus plantarum).